Here is a 333-residue protein sequence, read N- to C-terminus: Atrochrysone carboxyl ACP thioesterase MYCFIDRAFT_190111 (333 aa).

H108, H110, D112, and H113 together coordinate Zn(2+). The Proton donor/acceptor role is filled by D112.

It belongs to the metallo-beta-lactamase superfamily. It depends on Zn(2+) as a cofactor.

It carries out the reaction atrochrysone carboxyl-[ACP] + H2O = atrochrysone carboxylate + holo-[ACP] + H(+). It functions in the pathway secondary metabolite biosynthesis. Functionally, atrochrysone carboxyl ACP thioesterase; part of the gene cluster that mediates the biosynthesis of an emodin derivative that may be involved in black Sigatoka disease of banana. The pathway begins with the synthesis of atrochrysone thioester by the polyketide synthase PKS8-1. The atrochrysone carboxyl ACP thioesterase MYCFIDRAFT_190111 then breaks the thioester bond and releases the atrochrysone carboxylic acid from PKS8-1. The decarboxylase MYCFIDRAFT_34057 then catalyzes the concerted decarboxylation-elimination required to convert atochrysone carboxylic acid into emodin anthrone, which is further oxidized to emodin by the anthrone oxygenase MYCFIDRAFT_34418. The functions of the other tailoring enzymes as well as the final product of the cluster have still to be identified. The polypeptide is Atrochrysone carboxyl ACP thioesterase MYCFIDRAFT_190111 (Pseudocercospora fijiensis (strain CIRAD86) (Black leaf streak disease fungus)).